Here is a 389-residue protein sequence, read N- to C-terminus: Alpha carbonic anhydrase 8 (389 aa).

A signal peptide spans 1–22 (MKISSLGWVLVLIFISITIVSS). A disordered region spans residues 21-153 (SSAPAPKPPK…TKGNKGPAKW (133 aa)). A compositionally biased stretch (pro residues) spans 25–129 (APKPPKPKPA…PKPKPAPKPA (105 aa)). The region spanning 138–374 (TEFSYETKGN…VNKRKVYLYK (237 aa)) is the Alpha-carbonic anhydrase domain. Cys163 and Cys324 are joined by a disulfide. Residue Asn196 is glycosylated (N-linked (GlcNAc...) asparagine). His204 (proton acceptor) is an active-site residue. 3 residues coordinate Zn(2+): His232, His234, and His251. 320-321 (TA) provides a ligand contact to substrate. An N-linked (GlcNAc...) asparagine glycan is attached at Asn385.

This sequence belongs to the alpha-class carbonic anhydrase family. Zn(2+) serves as cofactor. In terms of processing, N-glycosylated.

It localises to the plastid. It is found in the chloroplast stroma. The enzyme catalyses hydrogencarbonate + H(+) = CO2 + H2O. Its function is as follows. Reversible hydration of carbon dioxide. The chain is Alpha carbonic anhydrase 8 (ACA8) from Arabidopsis thaliana (Mouse-ear cress).